Reading from the N-terminus, the 115-residue chain is UPF0145 protein lp_2083 (115 aa).

Belongs to the UPF0145 family.

This Lactiplantibacillus plantarum (strain ATCC BAA-793 / NCIMB 8826 / WCFS1) (Lactobacillus plantarum) protein is UPF0145 protein lp_2083.